The sequence spans 124 residues: Small ribosomal subunit protein uS12 (124 aa).

Aspartate 89 carries the post-translational modification 3-methylthioaspartic acid. Residues 103–124 (DTAGVKDRRQSRSKYGAKSPKE) form a disordered region.

The protein belongs to the universal ribosomal protein uS12 family. As to quaternary structure, part of the 30S ribosomal subunit. Contacts proteins S8 and S17. May interact with IF1 in the 30S initiation complex.

In terms of biological role, with S4 and S5 plays an important role in translational accuracy. Functionally, interacts with and stabilizes bases of the 16S rRNA that are involved in tRNA selection in the A site and with the mRNA backbone. Located at the interface of the 30S and 50S subunits, it traverses the body of the 30S subunit contacting proteins on the other side and probably holding the rRNA structure together. The combined cluster of proteins S8, S12 and S17 appears to hold together the shoulder and platform of the 30S subunit. The chain is Small ribosomal subunit protein uS12 from Prochlorococcus marinus (strain NATL2A).